We begin with the raw amino-acid sequence, 354 residues long: Sulfate/thiosulfate import ATP-binding protein CysA (354 aa).

Residues 3–237 (IEVRGLSKRF…PATPFVYGFL (235 aa)) form the ABC transporter domain. Residue 35–42 (GPSGCGKT) participates in ATP binding.

The protein belongs to the ABC transporter superfamily. Sulfate/tungstate importer (TC 3.A.1.6) family. In terms of assembly, the complex is composed of two ATP-binding proteins (CysA), two transmembrane proteins (CysT and CysW) and a solute-binding protein (CysP).

The protein resides in the cell inner membrane. The enzyme catalyses sulfate(out) + ATP + H2O = sulfate(in) + ADP + phosphate + H(+). The catalysed reaction is thiosulfate(out) + ATP + H2O = thiosulfate(in) + ADP + phosphate + H(+). Functionally, part of the ABC transporter complex CysAWTP involved in sulfate/thiosulfate import. Responsible for energy coupling to the transport system. The chain is Sulfate/thiosulfate import ATP-binding protein CysA from Bordetella parapertussis (strain 12822 / ATCC BAA-587 / NCTC 13253).